The chain runs to 343 residues: HTH-type transcriptional regulator GntR (343 aa).

The 55-residue stretch at 16-70 folds into the HTH lacI-type domain; the sequence is PTLNEVARRAGVSPITASRALRGVASVAEELAQKVRDAARELGYVANPAARALAS. The H-T-H motif DNA-binding region spans 18–37; that stretch reads LNEVARRAGVSPITASRALR.

Its activity is regulated as follows. Free GntR fails to recognize gluconate and 6-phosphogluconate, whereas the GntR/DNA complexes recognize both ligands. It is therefore likely that GntR DNA binding induces structural changes that permit GntR to recognize effectors. Involved in the regulation of glucose metabolism. Represses its own expression as well as that of the gluconate permease GntP. It employs an effector mediated de-repression mechanism: in the absence of ligand, GntR binds to the gntR and gntP promoters and represses their expression. The release of promoter bound GntR is induced by gluconate and 6-phosphogluconate that bind with similar apparent affinities to the GntR/DNA complex. The release of GntR leads to transcription of the genes. This Pseudomonas aeruginosa (strain ATCC 15692 / DSM 22644 / CIP 104116 / JCM 14847 / LMG 12228 / 1C / PRS 101 / PAO1) protein is HTH-type transcriptional regulator GntR.